Reading from the N-terminus, the 188-residue chain is Trafficking protein particle complex subunit 5 (188 aa).

This sequence belongs to the TRAPP small subunits family. BET3 subfamily. In terms of assembly, part of the multisubunit TRAPP (transport protein particle) complex.

Its subcellular location is the golgi apparatus. It is found in the cis-Golgi network. It localises to the endoplasmic reticulum. In terms of biological role, may play a role in vesicular transport from endoplasmic reticulum to Golgi. The protein is Trafficking protein particle complex subunit 5 (TRAPPC5) of Gallus gallus (Chicken).